The primary structure comprises 866 residues: Scm-like with four MBT domains protein 1 (866 aa).

4 MBT repeats span residues 20–120 (LSWE…LEAP), 128–232 (SDWD…LQPP), 242–348 (AEWQ…ISPP), and 356–453 (FDWA…LSTP). The interval 34-42 (VPYGSFKHV) is antigenic epitope. Residues 641–777 (KKKNKRIGRP…DDENKPPSPK (137 aa)) form a disordered region. Residues 663–682 (KASKRRKRRKNVFVHKKKRS) are compositionally biased toward basic residues. The segment covering 683–694 (SASVDNTPAGSP) has biased composition (polar residues). Acidic residues-rich tracts occupy residues 699 to 713 (GEDEDDPDEGDDDSL) and 721 to 730 (QQDELQEESE). The segment covering 737-749 (CSSSPTQSEISTS) has biased composition (low complexity). 2 positions are modified to phosphoserine: serine 767 and serine 775. One can recognise an SAM domain in the interval 796 to 864 (WSVADVVRFI…RIKFAFYEQF (69 aa)).

In terms of assembly, interacts with MYOD1. Component of the SLC (SFMBT1-LSD1-CoREST) corepressor complex, which also contains KDM1A/LSD1 and RCOR1/CoREST. Interacts with KDM1A/LSD1 and RCOR1/CoREST. Interacts with L3MBTL3. As to expression, expressed in all cell lines and normal tissues tested, including the thymus.

The protein localises to the nucleus. Histone-binding protein, which is part of various corepressor complexes. Mediates the recruitment of corepressor complexes to target genes, followed by chromatin compaction and repression of transcription. Plays a role during myogenesis: required for the maintenance of undifferentiated states of myogenic progenitor cells via interaction with MYOD1. Interaction with MYOD1 leads to the recruitment of associated corepressors and silencing of MYOD1 target genes. Part of the SLC complex in germ cells, where it may play a role during spermatogenesis. This chain is Scm-like with four MBT domains protein 1 (SFMBT1), found in Homo sapiens (Human).